A 367-amino-acid polypeptide reads, in one-letter code: MTQTLVVKIGTSSLTHPKTGDLSLSTIAVLVETLSKLRRQGQRIVLVSSGAVGVGCGRLGLSERPRTMALKQAVAAVGQGRLMRIYDDFFTTLNQPIAQVLLTRGDLVQRQRYLNAYNTFQELFNLGVIPIVNENDTVAVDELKFGDNDTLSALVASLVEADWLFLLTDVDRLYSADPRQQPDAQPISVVNSIEELAQVQVGDRGSIWGTGGMATKITAAEIAGEAGVRTVITEGRSPVNIERILAGEALGTQFEPQPRPINARKRWIAHALVPTGKLYLDRGAVQAIAQLGKSLLAAGIVQVEGVFQSQDAVLLCDRAGQEIGRGLVNYNSQELEKIQGRRSEEIPTILGYSGAETVVHRDNLVLS.

Lys-8 is an ATP binding site. The substrate site is built by Ser-49, Asp-136, and Asn-148. ATP is bound by residues 168–169 and 210–216; these read TD and TGGMATK. Residues 275 to 353 enclose the PUA domain; the sequence is TGKLYLDRGA…EEIPTILGYS (79 aa).

It belongs to the glutamate 5-kinase family.

It is found in the cytoplasm. The catalysed reaction is L-glutamate + ATP = L-glutamyl 5-phosphate + ADP. It participates in amino-acid biosynthesis; L-proline biosynthesis; L-glutamate 5-semialdehyde from L-glutamate: step 1/2. Catalyzes the transfer of a phosphate group to glutamate to form L-glutamate 5-phosphate. The sequence is that of Glutamate 5-kinase from Cyanothece sp. (strain PCC 7425 / ATCC 29141).